Consider the following 215-residue polypeptide: Cytochrome b6 (215 aa).

The chain crosses the membrane as a helical span at residues 32 to 52 (IFYCLGGITFTCFIIQVATGF). Cysteine 35 lines the heme c pocket. Residues histidine 86 and histidine 100 each coordinate heme b. Helical transmembrane passes span 90-110 (ASMMVLMMILHVCRVYLTGGF), 116-136 (LTWVTGIILAILTVSFGVTGY), and 186-206 (LHTFVLPLLTATFMLGHFLMI). Heme b is bound by residues histidine 187 and histidine 202.

Belongs to the cytochrome b family. PetB subfamily. The 4 large subunits of the cytochrome b6-f complex are cytochrome b6, subunit IV (17 kDa polypeptide, PetD), cytochrome f and the Rieske protein, while the 4 small subunits are PetG, PetL, PetM and PetN. The complex functions as a dimer. Heme b serves as cofactor. Heme c is required as a cofactor.

The protein resides in the plastid. The protein localises to the chloroplast thylakoid membrane. Component of the cytochrome b6-f complex, which mediates electron transfer between photosystem II (PSII) and photosystem I (PSI), cyclic electron flow around PSI, and state transitions. The chain is Cytochrome b6 from Euglena gracilis.